Consider the following 87-residue polypeptide: HssA/B-like protein 57 (87 aa).

The protein belongs to the hssA/B family.

The polypeptide is HssA/B-like protein 57 (hssl57) (Dictyostelium discoideum (Social amoeba)).